The following is a 364-amino-acid chain: Capsular polysaccharide phosphotransferase cps1A (364 aa).

The protein belongs to the stealth family.

Its function is as follows. Part of a capsular polysaccharide synthesis locus. The chain is Capsular polysaccharide phosphotransferase cps1A (cps1A) from Actinobacillus pleuropneumoniae (Haemophilus pleuropneumoniae).